The following is a 197-amino-acid chain: Recombination protein RecR (197 aa).

A C4-type zinc finger spans residues 55–70 (CVQCRDFTESEICTIC). In terms of domain architecture, Toprim spans 78-173 (QQLCVVESPA…RPSRLAQGMP (96 aa)).

Belongs to the RecR family.

In terms of biological role, may play a role in DNA repair. It seems to be involved in an RecBC-independent recombinational process of DNA repair. It may act with RecF and RecO. The protein is Recombination protein RecR of Xanthomonas oryzae pv. oryzae (strain MAFF 311018).